The chain runs to 412 residues: Maintenance of mitochondrial morphology protein 1 (412 aa).

The Lumenal segment spans residues 1–19 (MAQDVCPTRSEPSLSFLQG). A helical transmembrane segment spans residues 20 to 40 (LILGQLSVVLLIAAFIKFFIF). Over 41–412 (GEAPSAEETA…GSLPGIDMPT (372 aa)) the chain is Cytoplasmic. The 217-residue stretch at 121–337 (QPESLDWFNV…EPRFQEIELP (217 aa)) folds into the SMP-LTD domain. The segment covering 372–384 (ARQELDTETDGLR) has biased composition (basic and acidic residues). A disordered region spans residues 372–412 (ARQELDTETDGLRYRRRPVGDDTYSVSGSMPGSLPGIDMPT).

Belongs to the MMM1 family. As to quaternary structure, homodimer. Component of the ER-mitochondria encounter structure (ERMES) or MDM complex, composed of MMM1, MDM10, MDM12 and MDM34. An MMM1 homodimer associates with one molecule of MDM12 on each side in a pairwise head-to-tail manner, and the SMP-LTD domains of MMM1 and MDM12 generate a continuous hydrophobic tunnel for phospholipid trafficking.

It is found in the endoplasmic reticulum membrane. Functionally, component of the ERMES/MDM complex, which serves as a molecular tether to connect the endoplasmic reticulum (ER) and mitochondria. Components of this complex are involved in the control of mitochondrial shape and protein biogenesis, and function in nonvesicular lipid trafficking between the ER and mitochondria. The MDM12-MMM1 subcomplex functions in the major beta-barrel assembly pathway that is responsible for biogenesis of all outer membrane beta-barrel proteins, and acts in a late step after the SAM complex. The MDM10-MDM12-MMM1 subcomplex further acts in the TOM40-specific pathway after the action of the MDM12-MMM1 complex. Essential for establishing and maintaining the structure of mitochondria and maintenance of mtDNA nucleoids. The sequence is that of Maintenance of mitochondrial morphology protein 1 from Podospora anserina (strain S / ATCC MYA-4624 / DSM 980 / FGSC 10383) (Pleurage anserina).